A 518-amino-acid chain; its full sequence is MACCGGGRGEGAAATESEAYLEGEAVREARELVAELCRHFYGQGWVTGTVGSITVKANDPALPLADQLIVMSPSGVQKERMVAEDMYVLSADGKVLSSPVSKPWPNKPPKCTDCAPLFMKAYLMRGAGAVIHSHGMETCIATMLDHGAKEFRMTHMEMIKGIKGHGYRDELVVPIIENTPYEYELTDSLAEAIAAYPKATAVLVRNHGIYVWGDSWINAKTQAECYHYLFDAAIKLYQLGIDWTTPEHGPINSAKRPRSVLSSSIPNGCPDSKSSKHCVVLDIEGTTTPISFVTDVMFPYARDNVRKHLTSTYSSDETKEDIKLLRIQVEEDLKNGIVGSVPIPPDDADKEEVINALVANVESMIKADRKITSLKQLQGHIWRTGFESKELQGVVFDDVPEALKHWHASGMKVYIYSSGSREAQRLLFGNTAYGDLRQYLCGFFDTTTGNKRETRSYFEISQSLGVDSPAQILFITDVFQEAVAAKSAGFEVIISIRPGNAPLPENHGFRTIKSFSEI.

The interval 1-242 (MACCGGGRGE…AIKLYQLGID (242 aa)) is methylthioribulose-1-phosphate dehydratase. Residue C114 participates in substrate binding. Positions 132 and 134 each coordinate Zn(2+). E157 serves as the catalytic Proton donor/acceptor; for methylthioribulose-1-phosphate dehydratase activity. H207 is a binding site for Zn(2+). An enolase-phosphatase E1 region spans residues 279-518 (VVLDIEGTTT…FRTIKSFSEI (240 aa)). Mg(2+) contacts are provided by D282 and E284. Substrate-binding positions include 417-418 (SS) and K451. D477 contributes to the Mg(2+) binding site.

This sequence in the N-terminal section; belongs to the aldolase class II family. MtnB subfamily. In the C-terminal section; belongs to the HAD-like hydrolase superfamily. MasA/MtnC family. Zn(2+) is required as a cofactor. Mg(2+) serves as cofactor.

The catalysed reaction is 5-(methylsulfanyl)-D-ribulose 1-phosphate = 5-methylsulfanyl-2,3-dioxopentyl phosphate + H2O. It catalyses the reaction 5-methylsulfanyl-2,3-dioxopentyl phosphate + H2O = 1,2-dihydroxy-5-(methylsulfanyl)pent-1-en-3-one + phosphate. The protein operates within amino-acid biosynthesis; L-methionine biosynthesis via salvage pathway; L-methionine from S-methyl-5-thio-alpha-D-ribose 1-phosphate: step 2/6. It functions in the pathway amino-acid biosynthesis; L-methionine biosynthesis via salvage pathway; L-methionine from S-methyl-5-thio-alpha-D-ribose 1-phosphate: step 3/6. It participates in amino-acid biosynthesis; L-methionine biosynthesis via salvage pathway; L-methionine from S-methyl-5-thio-alpha-D-ribose 1-phosphate: step 4/6. The sequence is that of Probable bifunctional methylthioribulose-1-phosphate dehydratase/enolase-phosphatase E1 from Oryza sativa subsp. indica (Rice).